The following is a 691-amino-acid chain: Elongation factor G (691 aa).

Residues 8-283 form the tr-type G domain; it reads EDYRNFGIMA…AVVDYLPSPA (276 aa). Residues 17–24, 81–85, and 135–138 contribute to the GTP site; these read AHIDAGKT, DTPGH, and NKMD.

Belongs to the TRAFAC class translation factor GTPase superfamily. Classic translation factor GTPase family. EF-G/EF-2 subfamily.

It localises to the cytoplasm. Its function is as follows. Catalyzes the GTP-dependent ribosomal translocation step during translation elongation. During this step, the ribosome changes from the pre-translocational (PRE) to the post-translocational (POST) state as the newly formed A-site-bound peptidyl-tRNA and P-site-bound deacylated tRNA move to the P and E sites, respectively. Catalyzes the coordinated movement of the two tRNA molecules, the mRNA and conformational changes in the ribosome. This is Elongation factor G from Methylobacterium radiotolerans (strain ATCC 27329 / DSM 1819 / JCM 2831 / NBRC 15690 / NCIMB 10815 / 0-1).